We begin with the raw amino-acid sequence, 147 residues long: Nucleoside diphosphate kinase (147 aa).

The ATP site is built by Lys-11, Phe-59, Arg-87, Thr-93, Arg-104, and Asn-114. His-117 acts as the Pros-phosphohistidine intermediate in catalysis.

It belongs to the NDK family. In terms of assembly, homotetramer. It depends on Mg(2+) as a cofactor.

It localises to the cytoplasm. It catalyses the reaction a 2'-deoxyribonucleoside 5'-diphosphate + ATP = a 2'-deoxyribonucleoside 5'-triphosphate + ADP. The catalysed reaction is a ribonucleoside 5'-diphosphate + ATP = a ribonucleoside 5'-triphosphate + ADP. Major role in the synthesis of nucleoside triphosphates other than ATP. The ATP gamma phosphate is transferred to the NDP beta phosphate via a ping-pong mechanism, using a phosphorylated active-site intermediate. In Anaeromyxobacter sp. (strain K), this protein is Nucleoside diphosphate kinase.